A 361-amino-acid polypeptide reads, in one-letter code: Probable dual-specificity RNA methyltransferase RlmN (361 aa).

Glu104 acts as the Proton acceptor in catalysis. The Radical SAM core domain occupies 110 to 343 (HEYGNSVCVT…VTIRREQGHD (234 aa)). Cysteines 117 and 348 form a disulfide. Positions 124, 128, and 131 each coordinate [4Fe-4S] cluster. S-adenosyl-L-methionine contacts are provided by residues 174 to 175 (GE), Ser206, 229 to 231 (SLH), and Asn305. Cys348 acts as the S-methylcysteine intermediate in catalysis.

Belongs to the radical SAM superfamily. RlmN family. It depends on [4Fe-4S] cluster as a cofactor.

The protein resides in the cytoplasm. It catalyses the reaction adenosine(2503) in 23S rRNA + 2 reduced [2Fe-2S]-[ferredoxin] + 2 S-adenosyl-L-methionine = 2-methyladenosine(2503) in 23S rRNA + 5'-deoxyadenosine + L-methionine + 2 oxidized [2Fe-2S]-[ferredoxin] + S-adenosyl-L-homocysteine. It carries out the reaction adenosine(37) in tRNA + 2 reduced [2Fe-2S]-[ferredoxin] + 2 S-adenosyl-L-methionine = 2-methyladenosine(37) in tRNA + 5'-deoxyadenosine + L-methionine + 2 oxidized [2Fe-2S]-[ferredoxin] + S-adenosyl-L-homocysteine. In terms of biological role, specifically methylates position 2 of adenine 2503 in 23S rRNA and position 2 of adenine 37 in tRNAs. The chain is Probable dual-specificity RNA methyltransferase RlmN from Bacillus licheniformis (strain ATCC 14580 / DSM 13 / JCM 2505 / CCUG 7422 / NBRC 12200 / NCIMB 9375 / NCTC 10341 / NRRL NRS-1264 / Gibson 46).